The primary structure comprises 138 residues: Putative pre-16S rRNA nuclease (138 aa).

This sequence belongs to the YqgF nuclease family.

The protein localises to the cytoplasm. Its function is as follows. Could be a nuclease involved in processing of the 5'-end of pre-16S rRNA. This is Putative pre-16S rRNA nuclease from Klebsiella pneumoniae subsp. pneumoniae (strain ATCC 700721 / MGH 78578).